A 222-amino-acid polypeptide reads, in one-letter code: UPF0502 protein Shewmr7_1629 (222 aa).

Belongs to the UPF0502 family.

The sequence is that of UPF0502 protein Shewmr7_1629 from Shewanella sp. (strain MR-7).